Reading from the N-terminus, the 342-residue chain is Nucleoid-associated protein Sbal223_1817 (342 aa).

The protein belongs to the YejK family.

It is found in the cytoplasm. The protein localises to the nucleoid. The chain is Nucleoid-associated protein Sbal223_1817 from Shewanella baltica (strain OS223).